The sequence spans 123 residues: NHL-repeat-containing protein 4 (123 aa).

NHL repeat units follow at residues 35-78 (QPLG…FPRA) and 79-119 (GPPI…YQGL).

The sequence is that of NHL-repeat-containing protein 4 (NHLRC4) from Homo sapiens (Human).